The sequence spans 856 residues: Increased rDNA silencing protein 4 (856 aa).

Disordered regions lie at residues 1-204, 230-563, and 589-672; these read MSAS…EPKS, KQEE…PTPE, and TSLE…DEDL. Low complexity-rich tracts occupy residues 12–42, 67–84, and 111–130; these read GPASPTSSSTGASTNPATSGLAAALKGATLA, VPTPGTGSVSTSTSRTVG, and SRVVTSTPSSSSSVGSAGRT. The segment covering 152-162 has biased composition (basic and acidic residues); that stretch reads HVEERANDHAP. Low complexity predominate over residues 194 to 204; the sequence is ASAKPSSEPKS. Positions 239 to 254 are enriched in basic residues; that stretch reads KKKKKKKPRPASKTQH. Composition is skewed to polar residues over residues 255–275 and 303–315; these read HQTLTSPSPTPSEGLSIENQC and SLSTVESIKSSTG. Basic and acidic residues predominate over residues 329–347; sequence GETRNRNGDVRDKPSREGG. Polar residues-rich tracts occupy residues 396 to 410, 451 to 468, and 478 to 488; these read PVSQHAQISETTIIS, RVVSPSVDQSQTIRQSAE, and RNSTSSDETFV. Basic and acidic residues predominate over residues 503–514; the sequence is KELERVRPRLDR. The segment covering 517 to 535 has biased composition (low complexity); it reads TSTSSRASRVSTPASVRSP. Over residues 603–620 the composition is skewed to basic residues; the sequence is RRGHRHHHLPHPHLRHRT. The span at 644-654 shows a compositional bias: polar residues; sequence PSRQTEHTQPA. Residues 743–832 form the EH domain; sequence DSLGQVDLSR…EGVWESAMDR (90 aa).

Belongs to the IRS4 family.

Functionally, positive regulator of phosphatidylinositol 4,5-bisphosphate turnover and negatively regulates signaling through the cell integrity pathway. Involved in rDNA silencing. The protein is Increased rDNA silencing protein 4 (irs-4) of Neurospora crassa (strain ATCC 24698 / 74-OR23-1A / CBS 708.71 / DSM 1257 / FGSC 987).